Reading from the N-terminus, the 403-residue chain is Pyruvate, phosphate dikinase regulatory protein 1, chloroplastic (403 aa).

The transit peptide at 1–86 (MALLSAMKLQ…NTTGPMRPIE (86 aa)) directs the protein to the chloroplast. The interval 1–108 (MALLSAMKLQ…DVSSSSNGVS (108 aa)) is disordered. Composition is skewed to low complexity over residues 17–26 (SSNLNPNSKP), 69–80 (STITNGSNNTTG), and 87–108 (SSSR…NGVS). 269-276 (GVSRTGKT) is a binding site for ADP.

The protein belongs to the pyruvate, phosphate/water dikinase regulatory protein family. PDRP subfamily. In terms of assembly, interacts with PPDK1. As to expression, expressed in green tissues.

It is found in the plastid. The protein localises to the chloroplast stroma. The catalysed reaction is N(tele)-phospho-L-histidyl/L-threonyl-[pyruvate, phosphate dikinase] + ADP = N(tele)-phospho-L-histidyl/O-phospho-L-threonyl-[pyruvate, phosphate dikinase] + AMP + H(+). It catalyses the reaction N(tele)-phospho-L-histidyl/O-phospho-L-threonyl-[pyruvate, phosphate dikinase] + phosphate + H(+) = N(tele)-phospho-L-histidyl/L-threonyl-[pyruvate, phosphate dikinase] + diphosphate. Its activity is regulated as follows. Regulated by light/dark exposure. Its function is as follows. Bifunctional serine/threonine kinase and phosphorylase involved in the dark/light-mediated regulation of PPDK by catalyzing its phosphorylation/dephosphorylation. Dark/light-induced changes in stromal concentrations of the competing ADP and Pi substrates govern the direction of the reaction. In the dark, phosphorylates the catalytic intermediate of PPDK (PPDK-HisP), inactivating it. Light exposure induces the phosphorolysis reaction that reactivates PPDK. Unlike the kinase function which can utilize either Thr or Ser as target, the phosphorylase function has a strict substrate requirement for threonyl phosphate. The protein is Pyruvate, phosphate dikinase regulatory protein 1, chloroplastic (RP1) of Arabidopsis thaliana (Mouse-ear cress).